Here is a 59-residue protein sequence, read N- to C-terminus: Photosystem II reaction center protein K (59 aa).

A propeptide spanning residues 1–22 (MLNIFSLIGLNSALYSSSCFFA) is cleaved from the precursor. Residues 30-50 (FLSPIVDFMPVIPLLFFLLAF) form a helical membrane-spanning segment.

The protein belongs to the PsbK family. PSII is composed of 1 copy each of membrane proteins PsbA, PsbB, PsbC, PsbD, PsbE, PsbF, PsbH, PsbI, PsbJ, PsbK, PsbL, PsbM, PsbT, PsbX, PsbY, PsbZ, Psb30/Ycf12, at least 3 peripheral proteins of the oxygen-evolving complex and a large number of cofactors. It forms dimeric complexes.

The protein resides in the plastid. It is found in the chloroplast thylakoid membrane. Its function is as follows. One of the components of the core complex of photosystem II (PSII). PSII is a light-driven water:plastoquinone oxidoreductase that uses light energy to abstract electrons from H(2)O, generating O(2) and a proton gradient subsequently used for ATP formation. It consists of a core antenna complex that captures photons, and an electron transfer chain that converts photonic excitation into a charge separation. This is Photosystem II reaction center protein K from Silene latifolia (White campion).